Here is a 337-residue protein sequence, read N- to C-terminus: tRNA N6-adenosine threonylcarbamoyltransferase (337 aa).

Fe cation is bound by residues histidine 110 and histidine 114. Residues 133–137 (LVSGK), aspartate 166, glycine 179, and asparagine 271 contribute to the substrate site. Aspartate 300 contributes to the Fe cation binding site.

Belongs to the KAE1 / TsaD family. Fe(2+) is required as a cofactor.

It localises to the cytoplasm. It catalyses the reaction L-threonylcarbamoyladenylate + adenosine(37) in tRNA = N(6)-L-threonylcarbamoyladenosine(37) in tRNA + AMP + H(+). Functionally, required for the formation of a threonylcarbamoyl group on adenosine at position 37 (t(6)A37) in tRNAs that read codons beginning with adenine. Is involved in the transfer of the threonylcarbamoyl moiety of threonylcarbamoyl-AMP (TC-AMP) to the N6 group of A37, together with TsaE and TsaB. TsaD likely plays a direct catalytic role in this reaction. The polypeptide is tRNA N6-adenosine threonylcarbamoyltransferase (Buchnera aphidicola subsp. Schizaphis graminum (strain Sg)).